Reading from the N-terminus, the 362-residue chain is C-C chemokine receptor type 10 (362 aa).

Residues 1–48 (MGTKPTEQVSWGLYSGYDEEAYSVGPLPELCYKADVQAFSRAFQPSVS) lie on the Extracellular side of the membrane. A helical transmembrane segment spans residues 49–69 (LMVAVLGLAGNGLVLATHLAA). Over 70–80 (RRTTRSPTSVH) the chain is Cytoplasmic. Residues 81–101 (LLQLALADLLLALTLPFAAAG) form a helical membrane-spanning segment. Topologically, residues 102 to 115 (ALQGWNLGSTTCRA) are extracellular. A disulfide bond links C113 and C191. The helical transmembrane segment at 116–136 (ISGLYSASFHAGFLFLACISA) threads the bilayer. At 137–159 (DRYVAIARALPAGQRPSTPSRAH) the chain is on the cytoplasmic side. A helical membrane pass occupies residues 160-180 (LVSVFVWLLSLFLALPALLFS). The Extracellular portion of the chain corresponds to 181 to 208 (RDGPREGQRRCRLIFPESLTQTVKGASA). The chain crosses the membrane as a helical span at residues 209–229 (VAQVVLGFALPLGVMAACYAL). The Cytoplasmic portion of the chain corresponds to 230 to 247 (LGRTLLAARGPERRRALR). Residues 248 to 268 (VVVALVVAFVVLQLPYSLALL) traverse the membrane as a helical segment. At 269 to 291 (LDTADLLAARERSCSSSKRKDLA) the chain is on the extracellular side. Residues 292 to 312 (LLVTGGLTLVRCSLNPVLYAF) form a helical membrane-spanning segment. At 313 to 362 (LGLRFRRDLRRLLQGGGCSPKPNPRGRCPRRLRLSSCSAPTETHSLSWDN) the chain is on the cytoplasmic side.

Belongs to the G-protein coupled receptor 1 family. As to expression, expressed at high levels in small intestine, colon, lymph nodes, Peyer patches and at lower levels in thymus, lung and spleen.

It localises to the cell membrane. In terms of biological role, receptor for chemokines SCYA27 and SCYA28. Subsequently transduces a signal by increasing the intracellular calcium ions level. In Mus musculus (Mouse), this protein is C-C chemokine receptor type 10 (Ccr10).